Here is a 901-residue protein sequence, read N- to C-terminus: Probable inorganic carbon transporter subunit DabA (901 aa).

Zn(2+) contacts are provided by Cys-424, Asp-426, His-606, and Cys-621.

Belongs to the inorganic carbon transporter (TC 9.A.2) DabA family. As to quaternary structure, forms a complex with DabB. It depends on Zn(2+) as a cofactor.

The protein localises to the cell membrane. Its function is as follows. Part of an energy-coupled inorganic carbon pump. The sequence is that of Probable inorganic carbon transporter subunit DabA from Staphylococcus aureus (strain MRSA252).